Reading from the N-terminus, the 198-residue chain is Elongation factor Ts (198 aa).

Residues 81 to 84 (TDFV) form an involved in Mg(2+) ion dislocation from EF-Tu region.

Belongs to the EF-Ts family.

The protein localises to the cytoplasm. Functionally, associates with the EF-Tu.GDP complex and induces the exchange of GDP to GTP. It remains bound to the aminoacyl-tRNA.EF-Tu.GTP complex up to the GTP hydrolysis stage on the ribosome. This chain is Elongation factor Ts, found in Dictyoglomus thermophilum (strain ATCC 35947 / DSM 3960 / H-6-12).